Reading from the N-terminus, the 197-residue chain is Imidazoleglycerol-phosphate dehydratase (197 aa).

The protein belongs to the imidazoleglycerol-phosphate dehydratase family.

It localises to the cytoplasm. It catalyses the reaction D-erythro-1-(imidazol-4-yl)glycerol 3-phosphate = 3-(imidazol-4-yl)-2-oxopropyl phosphate + H2O. It functions in the pathway amino-acid biosynthesis; L-histidine biosynthesis; L-histidine from 5-phospho-alpha-D-ribose 1-diphosphate: step 6/9. The polypeptide is Imidazoleglycerol-phosphate dehydratase (Clostridium acetobutylicum (strain ATCC 824 / DSM 792 / JCM 1419 / IAM 19013 / LMG 5710 / NBRC 13948 / NRRL B-527 / VKM B-1787 / 2291 / W)).